We begin with the raw amino-acid sequence, 485 residues long: NGFI-A-binding protein 1 (485 aa).

The interval 4-82 (ALPRTLGELQ…RDWVTNPGLF (79 aa)) is NCD1. Glycyl lysine isopeptide (Lys-Gly) (interchain with G-Cter in SUMO2) cross-links involve residues K126, K129, and K143. Residues 160–187 (WQGHHATESEHSLSPADVGSPASPKESS) form a disordered region. A phosphoserine mark is found at S171 and S182. K211 is covalently cross-linked (Glycyl lysine isopeptide (Lys-Gly) (interchain with G-Cter in SUMO2)). The interval 220–309 (LLKNNKKLAK…ARQVSREVTY (90 aa)) is NCD2. A necessary for nuclear localization region spans residues 306 to 337 (EVTYKYTYRTTRLKCGERDELSPKRIKVEDGF). At S327 the chain carries Phosphoserine. K332 is covalently cross-linked (Glycyl lysine isopeptide (Lys-Gly) (interchain with G-Cter in SUMO1); alternate). A Glycyl lysine isopeptide (Lys-Gly) (interchain with G-Cter in SUMO2); alternate cross-link involves residue K332. Glycyl lysine isopeptide (Lys-Gly) (interchain with G-Cter in SUMO2) cross-links involve residues K354, K368, and K372. Residues 398–432 (RQSSGEHSPDGLPSDGSDGQGERPLNLRMPNVQNR) form a disordered region. A Phosphoserine modification is found at S405. Glycyl lysine isopeptide (Lys-Gly) (interchain with G-Cter in SUMO2) cross-links involve residues K452, K463, and K475. A Glycyl lysine isopeptide (Lys-Gly) (interchain with G-Cter in SUMO1); alternate cross-link involves residue K478. K478 participates in a covalent cross-link: Glycyl lysine isopeptide (Lys-Gly) (interchain with G-Cter in SUMO2); alternate.

Belongs to the NAB family. As to quaternary structure, homomultimers may associate with EGR1 bound to DNA.

The protein localises to the nucleus. Acts as a transcriptional repressor for zinc finger transcription factors EGR1 and EGR2. This chain is NGFI-A-binding protein 1 (NAB1), found in Mesocricetus auratus (Golden hamster).